Consider the following 174-residue polypeptide: Large ribosomal subunit protein uL10 (174 aa).

The protein belongs to the universal ribosomal protein uL10 family. As to quaternary structure, part of the ribosomal stalk of the 50S ribosomal subunit. The N-terminus interacts with L11 and the large rRNA to form the base of the stalk. The C-terminus forms an elongated spine to which L12 dimers bind in a sequential fashion forming a multimeric L10(L12)X complex.

In terms of biological role, forms part of the ribosomal stalk, playing a central role in the interaction of the ribosome with GTP-bound translation factors. The sequence is that of Large ribosomal subunit protein uL10 from Trichlorobacter lovleyi (strain ATCC BAA-1151 / DSM 17278 / SZ) (Geobacter lovleyi).